Here is a 142-residue protein sequence, read N- to C-terminus: Large ribosomal subunit protein uL11 (142 aa).

This sequence belongs to the universal ribosomal protein uL11 family. As to quaternary structure, part of the ribosomal stalk of the 50S ribosomal subunit. Interacts with L10 and the large rRNA to form the base of the stalk. L10 forms an elongated spine to which L12 dimers bind in a sequential fashion forming a multimeric L10(L12)X complex. In terms of processing, one or more lysine residues are methylated.

Functionally, forms part of the ribosomal stalk which helps the ribosome interact with GTP-bound translation factors. This Beijerinckia indica subsp. indica (strain ATCC 9039 / DSM 1715 / NCIMB 8712) protein is Large ribosomal subunit protein uL11.